Here is a 245-residue protein sequence, read N- to C-terminus: MPRYKLTIEYDGTPYAGWQIQADQQTVQGALAQAFKRFCGEDVHVAGAGRTDAGVHATGQVAHVDLSRHWRSDTVRDAMTAQLRPHPIAVLSAEEVPDSFDARFSATKRHYLYRIINRRPDLALDRDRAWRIPQKLDAQAMHEAAQRLLGKHDFSTFRAAECQAASPLKTLDQLDVSRSGDEIRVITSARSFLHHQVRSMVGSLMRVGEGRWSADDLEAALKAADRTRCGPMAPAAGLYLAAVSY.

Asp52 serves as the catalytic Nucleophile. Position 111 (Tyr111) interacts with substrate.

The protein belongs to the tRNA pseudouridine synthase TruA family. As to quaternary structure, homodimer.

The enzyme catalyses uridine(38/39/40) in tRNA = pseudouridine(38/39/40) in tRNA. Formation of pseudouridine at positions 38, 39 and 40 in the anticodon stem and loop of transfer RNAs. This chain is tRNA pseudouridine synthase A, found in Xanthobacter autotrophicus (strain ATCC BAA-1158 / Py2).